Here is a 340-residue protein sequence, read N- to C-terminus: Extracellular matrix protein-binding protein emp (340 aa).

Residues 1–26 (MKKKLLVLTMSTLFATQIMNSNHAKA) form the signal peptide.

It localises to the cell surface. In terms of biological role, adhesin that binds to the host cell extracellular matrix proteins fibronectin, fibrinogen, collagen, and vitronectin. This is Extracellular matrix protein-binding protein emp (emp) from Staphylococcus aureus (strain USA300).